A 150-amino-acid polypeptide reads, in one-letter code: Monothiol glutaredoxin-S13 (150 aa).

Residues Pro30 to Asn52 are disordered. Residues Ser31–Ser44 are compositionally biased toward low complexity. The Glutaredoxin domain maps to Lys53 to Trp149. Position 73 (Cys73) interacts with [2Fe-2S] cluster. The Responsive for interaction with TGA factors motif lies at Ala147–Leu150.

This sequence belongs to the glutaredoxin family. CC-type subfamily.

The protein localises to the cytoplasm. It is found in the nucleus. May only reduce GSH-thiol disulfides, but not protein disulfides. This is Monothiol glutaredoxin-S13 (GRXS13) from Arabidopsis thaliana (Mouse-ear cress).